Consider the following 204-residue polypeptide: LexA repressor (204 aa).

Positions 30-50 (IREICQGVGLSSPSTVHHHLK) form a DNA-binding region, H-T-H motif. Catalysis depends on for autocatalytic cleavage activity residues Ser125 and Lys162.

This sequence belongs to the peptidase S24 family. In terms of assembly, homodimer.

The enzyme catalyses Hydrolysis of Ala-|-Gly bond in repressor LexA.. Represses a number of genes involved in the response to DNA damage (SOS response), including recA and lexA. In the presence of single-stranded DNA, RecA interacts with LexA causing an autocatalytic cleavage which disrupts the DNA-binding part of LexA, leading to derepression of the SOS regulon and eventually DNA repair. This chain is LexA repressor, found in Carboxydothermus hydrogenoformans (strain ATCC BAA-161 / DSM 6008 / Z-2901).